The primary structure comprises 575 residues: MLKLLKQISTTSTFKKPSSINNGFININLFKNYCTSVKQEDKKKVLITTPIFYVNGPPHIGHLYSALLGDALGRWNRFIGNDTLFMTGTDEHGSKVDEAAKKNGLKTIDYCDKISNRFRELFDKADIKYDDFIRTTEPRHKEAVTAIWNRLLERGYIYKGVYKGWYCTSDESFLTDDQVTEGMSPITPQNPISKKCMISLESGHEVNWIEEENYMFKLSEFSKTIENWFEEVKPIFPAIHVNLLRYMLSQGIKDLSISRPSSRIPWGIEVPNDPSQTIYVWLDALTNYLTVTGYPNVSPNSSQSHWSNATHIIGKDIIKFHSVYWPSFLIAADYPLPKSIICHAHWTVNREKMSKSRGNVVDPFLAIDNHGLELIRYFLLKGGGLENDGDWSEHELAVRFKSDLADTYGNLISRCTGKALNPSGEWPKSVTDTSLFTMDDQKLIENSSILVKSVSTHYDRGDFKSGIFEIMTFLYECNLYVQNQAPWKLVPKPNRVGSDLIRLNTIIYIAIEMIRITSLLLSPIIPTSSNLTLNYLSIPLENRSNPSNFKFGYNYHQNQNNLKLPKEILILFHKK.

Positions 52-62 (FYVNGPPHIGH) match the 'HIGH' region motif. A 'KMSKS' region motif is present at residues 352–356 (KMSKS). Position 355 (K355) interacts with ATP.

The protein belongs to the class-I aminoacyl-tRNA synthetase family.

The protein localises to the mitochondrion matrix. It carries out the reaction tRNA(Met) + L-methionine + ATP = L-methionyl-tRNA(Met) + AMP + diphosphate. In Dictyostelium discoideum (Social amoeba), this protein is Probable methionine--tRNA ligase, mitochondrial (mmetS).